The primary structure comprises 228 residues: 2-C-methyl-D-erythritol 4-phosphate cytidylyltransferase (228 aa).

The protein belongs to the IspD/TarI cytidylyltransferase family. IspD subfamily.

The enzyme catalyses 2-C-methyl-D-erythritol 4-phosphate + CTP + H(+) = 4-CDP-2-C-methyl-D-erythritol + diphosphate. It functions in the pathway isoprenoid biosynthesis; isopentenyl diphosphate biosynthesis via DXP pathway; isopentenyl diphosphate from 1-deoxy-D-xylulose 5-phosphate: step 2/6. In terms of biological role, catalyzes the formation of 4-diphosphocytidyl-2-C-methyl-D-erythritol from CTP and 2-C-methyl-D-erythritol 4-phosphate (MEP). The sequence is that of 2-C-methyl-D-erythritol 4-phosphate cytidylyltransferase from Crocosphaera subtropica (strain ATCC 51142 / BH68) (Cyanothece sp. (strain ATCC 51142)).